We begin with the raw amino-acid sequence, 742 residues long: Phosphoribosylformylglycinamidine synthase subunit PurL (742 aa).

His-54 is an active-site residue. Tyr-57 and Lys-96 together coordinate ATP. Glu-98 is a binding site for Mg(2+). Substrate contacts are provided by residues 99 to 102 and Arg-121; that span reads SHNH. The Proton acceptor role is filled by His-100. Asp-122 serves as a coordination point for Mg(2+). Gln-245 serves as a coordination point for substrate. Asp-273 provides a ligand contact to Mg(2+). 317–319 contributes to the substrate binding site; that stretch reads ESQ. ATP contacts are provided by Asp-500 and Gly-537. Residue Asn-538 coordinates Mg(2+). Ser-540 contacts substrate.

This sequence belongs to the FGAMS family. Monomer. Part of the FGAM synthase complex composed of 1 PurL, 1 PurQ and 2 PurS subunits.

It is found in the cytoplasm. The catalysed reaction is N(2)-formyl-N(1)-(5-phospho-beta-D-ribosyl)glycinamide + L-glutamine + ATP + H2O = 2-formamido-N(1)-(5-O-phospho-beta-D-ribosyl)acetamidine + L-glutamate + ADP + phosphate + H(+). Its pathway is purine metabolism; IMP biosynthesis via de novo pathway; 5-amino-1-(5-phospho-D-ribosyl)imidazole from N(2)-formyl-N(1)-(5-phospho-D-ribosyl)glycinamide: step 1/2. Part of the phosphoribosylformylglycinamidine synthase complex involved in the purines biosynthetic pathway. Catalyzes the ATP-dependent conversion of formylglycinamide ribonucleotide (FGAR) and glutamine to yield formylglycinamidine ribonucleotide (FGAM) and glutamate. The FGAM synthase complex is composed of three subunits. PurQ produces an ammonia molecule by converting glutamine to glutamate. PurL transfers the ammonia molecule to FGAR to form FGAM in an ATP-dependent manner. PurS interacts with PurQ and PurL and is thought to assist in the transfer of the ammonia molecule from PurQ to PurL. This chain is Phosphoribosylformylglycinamidine synthase subunit PurL, found in Oceanobacillus iheyensis (strain DSM 14371 / CIP 107618 / JCM 11309 / KCTC 3954 / HTE831).